Reading from the N-terminus, the 262-residue chain is Phosphatidylserine decarboxylase proenzyme (262 aa).

Catalysis depends on charge relay system; for autoendoproteolytic cleavage activity residues Asp86, His142, and Ser226. The active-site Schiff-base intermediate with substrate; via pyruvic acid; for decarboxylase activity is the Ser226. Ser226 bears the Pyruvic acid (Ser); by autocatalysis mark.

It belongs to the phosphatidylserine decarboxylase family. PSD-B subfamily. Prokaryotic type I sub-subfamily. As to quaternary structure, heterodimer of a large membrane-associated beta subunit and a small pyruvoyl-containing alpha subunit. Pyruvate is required as a cofactor. In terms of processing, is synthesized initially as an inactive proenzyme. Formation of the active enzyme involves a self-maturation process in which the active site pyruvoyl group is generated from an internal serine residue via an autocatalytic post-translational modification. Two non-identical subunits are generated from the proenzyme in this reaction, and the pyruvate is formed at the N-terminus of the alpha chain, which is derived from the carboxyl end of the proenzyme. The autoendoproteolytic cleavage occurs by a canonical serine protease mechanism, in which the side chain hydroxyl group of the serine supplies its oxygen atom to form the C-terminus of the beta chain, while the remainder of the serine residue undergoes an oxidative deamination to produce ammonia and the pyruvoyl prosthetic group on the alpha chain. During this reaction, the Ser that is part of the protease active site of the proenzyme becomes the pyruvoyl prosthetic group, which constitutes an essential element of the active site of the mature decarboxylase.

The protein localises to the cell membrane. It carries out the reaction a 1,2-diacyl-sn-glycero-3-phospho-L-serine + H(+) = a 1,2-diacyl-sn-glycero-3-phosphoethanolamine + CO2. It participates in phospholipid metabolism; phosphatidylethanolamine biosynthesis; phosphatidylethanolamine from CDP-diacylglycerol: step 2/2. Catalyzes the formation of phosphatidylethanolamine (PtdEtn) from phosphatidylserine (PtdSer). This chain is Phosphatidylserine decarboxylase proenzyme, found in Bacillus cereus (strain B4264).